A 228-amino-acid polypeptide reads, in one-letter code: Lipoprotein-releasing system ATP-binding protein LolD 2 (228 aa).

The region spanning 9–228 (RGLERVYKTE…KDGHLELQRV (220 aa)) is the ABC transporter domain. 42–49 (GPSGSGKS) is an ATP binding site.

This sequence belongs to the ABC transporter superfamily. Lipoprotein translocase (TC 3.A.1.125) family. As to quaternary structure, the complex is composed of two ATP-binding proteins (LolD) and two transmembrane proteins (LolC and LolE).

It localises to the cell inner membrane. Part of the ABC transporter complex LolCDE involved in the translocation of mature outer membrane-directed lipoproteins, from the inner membrane to the periplasmic chaperone, LolA. Responsible for the formation of the LolA-lipoprotein complex in an ATP-dependent manner. The protein is Lipoprotein-releasing system ATP-binding protein LolD 2 of Caulobacter vibrioides (strain ATCC 19089 / CIP 103742 / CB 15) (Caulobacter crescentus).